Here is a 243-residue protein sequence, read N- to C-terminus: Isoprenyl transferase 2 (243 aa).

Asp-23 is an active-site residue. Asp-23 provides a ligand contact to Mg(2+). Residues 24–27 (GNGR), Trp-28, Arg-36, His-40, and 68–70 (STE) contribute to the substrate site. Catalysis depends on Asn-71, which acts as the Proton acceptor. Substrate contacts are provided by residues Trp-72, Arg-74, Arg-191, and 197-199 (RTS). Glu-210 serves as a coordination point for Mg(2+).

This sequence belongs to the UPP synthase family. As to quaternary structure, homodimer. Mg(2+) serves as cofactor.

In terms of biological role, catalyzes the condensation of isopentenyl diphosphate (IPP) with allylic pyrophosphates generating different type of terpenoids. This Corynebacterium efficiens (strain DSM 44549 / YS-314 / AJ 12310 / JCM 11189 / NBRC 100395) protein is Isoprenyl transferase 2.